A 238-amino-acid polypeptide reads, in one-letter code: Ribonuclease PH (238 aa).

Residues Arg-86 and 124–126 (GTR) each bind phosphate.

The protein belongs to the RNase PH family. Homohexameric ring arranged as a trimer of dimers.

It carries out the reaction tRNA(n+1) + phosphate = tRNA(n) + a ribonucleoside 5'-diphosphate. Its function is as follows. Phosphorolytic 3'-5' exoribonuclease that plays an important role in tRNA 3'-end maturation. Removes nucleotide residues following the 3'-CCA terminus of tRNAs; can also add nucleotides to the ends of RNA molecules by using nucleoside diphosphates as substrates, but this may not be physiologically important. Probably plays a role in initiation of 16S rRNA degradation (leading to ribosome degradation) during starvation. The sequence is that of Ribonuclease PH from Maricaulis maris (strain MCS10) (Caulobacter maris).